Consider the following 385-residue polypeptide: Zinc finger protein B385R (385 aa).

2 consecutive C2H2-type zinc fingers follow at residues Leu-166–His-190 and Cys-168–His-190.

Belongs to the asfivirus B385R family.

The protein is Zinc finger protein B385R of African swine fever virus (isolate Tick/Malawi/Lil 20-1/1983) (ASFV).